The sequence spans 150 residues: Snaclec rhinocetin subunit beta (150 aa).

The N-terminal stretch at Met1–Ala23 is a signal peptide. 3 disulfide bridges follow: Cys27–Cys38, Cys55–Cys144, and Cys121–Cys136. In terms of domain architecture, C-type lectin spans Tyr34–Lys145.

The protein belongs to the snaclec family. As to quaternary structure, heterodimer; disulfide-linked. Expressed by the venom gland.

The protein resides in the secreted. Its function is as follows. Antagonist of the alpha-2 subunit of the integrin alpha-2/beta-1 (ITGA2/ITGB1) on human platelets and endothelial cells. This protein inhibits collagen-stimulated activation of human platelets in a dose-dependent manner. In addition, it antagonizes the binding of monoclonal antibodies against the alpha-2 subunit of integrin alpha-2/beta-1 to platelets and it coimmunoprecipitates with this integrin. The polypeptide is Snaclec rhinocetin subunit beta (Bitis rhinoceros (West African gaboon viper)).